We begin with the raw amino-acid sequence, 471 residues long: Probable ribonuclease FAU-1 (471 aa).

This sequence belongs to the FAU-1 family.

Probable RNase involved in rRNA stability through maturation and/or degradation of precursor rRNAs. Binds to RNA in loop regions with AU-rich sequences. The sequence is that of Probable ribonuclease FAU-1 from Thermococcus gammatolerans (strain DSM 15229 / JCM 11827 / EJ3).